The chain runs to 155 residues: Transcriptional regulator MraZ (155 aa).

2 SpoVT-AbrB domains span residues 7–63 (REQH…EPSV) and 92–135 (LDQT…EPLR).

The protein belongs to the MraZ family. Forms oligomers.

Its subcellular location is the cytoplasm. The protein resides in the nucleoid. The sequence is that of Transcriptional regulator MraZ from Chlorobaculum tepidum (strain ATCC 49652 / DSM 12025 / NBRC 103806 / TLS) (Chlorobium tepidum).